Here is a 211-residue protein sequence, read N- to C-terminus: Peptidyl-tRNA hydrolase (211 aa).

Residue Tyr17 coordinates tRNA. Catalysis depends on His22, which acts as the Proton acceptor. Residues Phe79, Asn81, and Asn127 each contribute to the tRNA site.

Belongs to the PTH family. As to quaternary structure, monomer.

It localises to the cytoplasm. The catalysed reaction is an N-acyl-L-alpha-aminoacyl-tRNA + H2O = an N-acyl-L-amino acid + a tRNA + H(+). In terms of biological role, hydrolyzes ribosome-free peptidyl-tRNAs (with 1 or more amino acids incorporated), which drop off the ribosome during protein synthesis, or as a result of ribosome stalling. Catalyzes the release of premature peptidyl moieties from peptidyl-tRNA molecules trapped in stalled 50S ribosomal subunits, and thus maintains levels of free tRNAs and 50S ribosomes. The sequence is that of Peptidyl-tRNA hydrolase from Solidesulfovibrio magneticus (strain ATCC 700980 / DSM 13731 / RS-1) (Desulfovibrio magneticus).